Here is a 142-residue protein sequence, read N- to C-terminus: Arginine vasopressin-induced protein 1 (142 aa).

Disordered regions lie at residues 1–28 (MGTPASVVSEPPLWQVSTPQTRGRKQAS) and 74–142 (RLRR…QIRH). Over residues 15–28 (QVSTPQTRGRKQAS) the composition is skewed to polar residues. Residues 74–88 (RLRRKRPPKQNHCSR) show a composition bias toward basic residues. The span at 96 to 119 (STASDPQASTTDTASSEQSGNSRR) shows a compositional bias: polar residues.

Its function is as follows. May be involved in MAP kinase activation, epithelial sodium channel (ENaC) down-regulation and cell cycling. This chain is Arginine vasopressin-induced protein 1 (Avpi1), found in Mus musculus (Mouse).